Reading from the N-terminus, the 334-residue chain is N-acetyl-gamma-glutamyl-phosphate reductase (334 aa).

Residue C154 is part of the active site.

It belongs to the NAGSA dehydrogenase family. Type 1 subfamily.

The protein resides in the cytoplasm. The enzyme catalyses N-acetyl-L-glutamate 5-semialdehyde + phosphate + NADP(+) = N-acetyl-L-glutamyl 5-phosphate + NADPH + H(+). It functions in the pathway amino-acid biosynthesis; L-arginine biosynthesis; N(2)-acetyl-L-ornithine from L-glutamate: step 3/4. Catalyzes the NADPH-dependent reduction of N-acetyl-5-glutamyl phosphate to yield N-acetyl-L-glutamate 5-semialdehyde. In Pectobacterium carotovorum subsp. carotovorum (strain PC1), this protein is N-acetyl-gamma-glutamyl-phosphate reductase.